We begin with the raw amino-acid sequence, 177 residues long: NAD(P)H-quinone oxidoreductase subunit 6, chloroplastic (177 aa).

5 helical membrane-spanning segments follow: residues 10-30 (ILVVFLGLVLILGGLGVVLFT), 33-53 (IYSAFSLGLVLICVSLFYILL), 61-81 (AQLLIYVGAINVLILFAVMFM), 92-112 (LWTVGDGVTSLVCTSILFLLI), and 152-172 (FFLPFELISIILLVALIGAIS).

This sequence belongs to the complex I subunit 6 family. In terms of assembly, NDH is composed of at least 16 different subunits, 5 of which are encoded in the nucleus.

It localises to the plastid. The protein localises to the chloroplast thylakoid membrane. The catalysed reaction is a plastoquinone + NADH + (n+1) H(+)(in) = a plastoquinol + NAD(+) + n H(+)(out). It carries out the reaction a plastoquinone + NADPH + (n+1) H(+)(in) = a plastoquinol + NADP(+) + n H(+)(out). In terms of biological role, NDH shuttles electrons from NAD(P)H:plastoquinone, via FMN and iron-sulfur (Fe-S) centers, to quinones in the photosynthetic chain and possibly in a chloroplast respiratory chain. The immediate electron acceptor for the enzyme in this species is believed to be plastoquinone. Couples the redox reaction to proton translocation, and thus conserves the redox energy in a proton gradient. The chain is NAD(P)H-quinone oxidoreductase subunit 6, chloroplastic (ndhG) from Lemna minor (Common duckweed).